The sequence spans 263 residues: tRNA pseudouridine synthase A (263 aa).

The Nucleophile role is filled by Asp-57. Tyr-115 contributes to the substrate binding site.

It belongs to the tRNA pseudouridine synthase TruA family. In terms of assembly, homodimer.

It carries out the reaction uridine(38/39/40) in tRNA = pseudouridine(38/39/40) in tRNA. Its function is as follows. Formation of pseudouridine at positions 38, 39 and 40 in the anticodon stem and loop of transfer RNAs. This is tRNA pseudouridine synthase A from Buchnera aphidicola subsp. Schizaphis graminum (strain Sg).